A 278-amino-acid polypeptide reads, in one-letter code: Phosphatidylglycerol--prolipoprotein diacylglyceryl transferase (278 aa).

Transmembrane regions (helical) follow at residues 12-32, 44-64, 86-106, and 113-133; these read FGPLTLRWYGLLIAMAVLIGL, LENGLISDLLPLLVLFSVIGA, IWEGGIAIHGALIAGTLTLIL, and QPFLDVLDVLAPSVALGQAIG. Arg-134 is an a 1,2-diacyl-sn-glycero-3-phospho-(1'-sn-glycerol) binding site. A run of 3 helical transmembrane segments spans residues 173–193, 203–223, and 246–266; these read PTFLYESIWNLLLFVLLLVLF, FPAGTLSCVYLIGYSLGRIWI, and IAQLMSAMLMVLGGLGLWWLK.

Belongs to the Lgt family.

It is found in the cell inner membrane. The catalysed reaction is L-cysteinyl-[prolipoprotein] + a 1,2-diacyl-sn-glycero-3-phospho-(1'-sn-glycerol) = an S-1,2-diacyl-sn-glyceryl-L-cysteinyl-[prolipoprotein] + sn-glycerol 1-phosphate + H(+). It functions in the pathway protein modification; lipoprotein biosynthesis (diacylglyceryl transfer). Its function is as follows. Catalyzes the transfer of the diacylglyceryl group from phosphatidylglycerol to the sulfhydryl group of the N-terminal cysteine of a prolipoprotein, the first step in the formation of mature lipoproteins. The sequence is that of Phosphatidylglycerol--prolipoprotein diacylglyceryl transferase from Parasynechococcus marenigrum (strain WH8102).